A 320-amino-acid chain; its full sequence is Copper chaperone for superoxide dismutase, chloroplastic/cytosolic (320 aa).

A chloroplast-targeting transit peptide spans 1–67 (MASILRSVAT…LSRSFVSSPM (67 aa)). The region spanning 86-149 (QLLTEFMVDM…ALEQTGRKAR (64 aa)) is the HMA domain. The Cu cation site is built by cysteine 97, cysteine 100, cysteine 300, and cysteine 302.

It in the C-terminal section; belongs to the Cu-Zn superoxide dismutase family. Interacts with CSD1. The cofactor is Cu(2+). As to expression, expressed in roots, shoots, stems and flowers, and at lower levels in rosette and cauline leaves.

It localises to the plastid. The protein localises to the chloroplast. It is found in the cytoplasm. Its subcellular location is the cytosol. Functionally, copper chaperone for the superoxide dismutases CSD1, CSD2 and CSD3. Binds copper ions and delivers them specifically to CSDs. Is required for assistance in CSDs disulfide bond formation and thereby activation of CSDs. May be involved in the negative regulation of heat stress-responsive genes and thermotolerance. This chain is Copper chaperone for superoxide dismutase, chloroplastic/cytosolic (CCS), found in Arabidopsis thaliana (Mouse-ear cress).